Reading from the N-terminus, the 95-residue chain is NELL2-interacting cell ontogeny regulator 1 (95 aa).

The N-terminal stretch at 1–34 (MAPPPACRSPMSPPPPPLLLLLLSLALLGARARA) is a signal peptide.

This sequence belongs to the NICOL family. As to quaternary structure, interacts with NELL2; triggers epididymal differentiation. Interacts with cell surface receptor TFRC; the interaction mediates uptake of NICOL1 into fibroblasts. As to expression, detected in the brain (at protein level). Also expressed at low levels in the kidney, primarily in tubular epithelial cells.

Its subcellular location is the secreted. It localises to the cytoplasm. The protein resides in the perinuclear region. MRNA-binding protein which interacts with a range of target mRNAs including SERPINE1, ACTA2, CCN2 and COL4A1 and may promote extracellular matrix production. Binds to the 3'-UTR of SERPINE1 mRNA and stabilizes the mRNA, possibly by competing for binding with SERBP1 and preventing SERBP1-mediated mRNA degradation. Also binds to the 3'-UTR of ACTA2. Testis-derived lumicrine factor that triggers epididymal differentiation and sperm maturation. This Homo sapiens (Human) protein is NELL2-interacting cell ontogeny regulator 1.